The following is a 134-amino-acid chain: Iron-sulfur cluster insertion protein ErpA (134 aa).

Positions 47, 126, and 128 each coordinate iron-sulfur cluster.

The protein belongs to the HesB/IscA family. Homodimer. It depends on iron-sulfur cluster as a cofactor.

Required for insertion of 4Fe-4S clusters for at least IspG. This chain is Iron-sulfur cluster insertion protein ErpA, found in Coxiella burnetii (strain Dugway 5J108-111).